The chain runs to 174 residues: Soma ferritin (174 aa).

The 150-residue stretch at 8–157 folds into the Ferritin-like diiron domain; sequence QNYHAESEAG…DYITNLKRVG (150 aa). Fe cation contacts are provided by Glu-25, Glu-60, His-63, Glu-105, and Gln-139.

It belongs to the ferritin family. As to quaternary structure, oligomer of 12 or 24 subunits. The functional molecule is roughly spherical and contains a central cavity into which the polymeric mineral iron core is deposited. As to expression, expressed in somatic tissues but not in oocytes.

The protein localises to the cytoplasm. It catalyses the reaction 4 Fe(2+) + O2 + 4 H(+) = 4 Fe(3+) + 2 H2O. Its function is as follows. Stores iron in a soluble, non-toxic, readily available form. Important for iron homeostasis. Has ferroxidase activity. Iron is taken up in the ferrous form and deposited as ferric hydroxides after oxidation. The polypeptide is Soma ferritin (Lymnaea stagnalis (Great pond snail)).